The sequence spans 394 residues: 3-dehydroquinate synthase (394 aa).

NAD(+)-binding positions include 112–116, 136–137, K149, K158, and 176–179; these read GVIGD, TT, and TLAT. E191, H254, and H276 together coordinate Zn(2+). Over residues 371–388 the composition is skewed to polar residues; sequence STNQHTTYSPHQHATTKP. Residues 371–394 are disordered; the sequence is STNQHTTYSPHQHATTKPPNRRPH.

It belongs to the sugar phosphate cyclases superfamily. Dehydroquinate synthase family. The cofactor is NAD(+). Co(2+) serves as cofactor. It depends on Zn(2+) as a cofactor.

The protein localises to the cytoplasm. The enzyme catalyses 7-phospho-2-dehydro-3-deoxy-D-arabino-heptonate = 3-dehydroquinate + phosphate. It functions in the pathway metabolic intermediate biosynthesis; chorismate biosynthesis; chorismate from D-erythrose 4-phosphate and phosphoenolpyruvate: step 2/7. In terms of biological role, catalyzes the conversion of 3-deoxy-D-arabino-heptulosonate 7-phosphate (DAHP) to dehydroquinate (DHQ). The chain is 3-dehydroquinate synthase from Xylella fastidiosa (strain 9a5c).